The chain runs to 388 residues: 3-dehydroquinate synthase (388 aa).

Belongs to the archaeal-type DHQ synthase family.

The catalysed reaction is 2-amino-2,3,7-trideoxy-D-lyxo-hept-6-ulosonate + NAD(+) + H2O = 3-dehydroquinate + NH4(+) + NADH + H(+). Catalyzes the oxidative deamination and cyclization of 2-amino-3,7-dideoxy-D-threo-hept-6-ulosonic acid (ADH) to yield 3-dehydroquinate (DHQ), which is fed into the canonical shikimic pathway of aromatic amino acid biosynthesis. The sequence is that of 3-dehydroquinate synthase from Natronomonas pharaonis (strain ATCC 35678 / DSM 2160 / CIP 103997 / JCM 8858 / NBRC 14720 / NCIMB 2260 / Gabara) (Halobacterium pharaonis).